The chain runs to 228 residues: 2,3-bisphosphoglycerate-dependent phosphoglycerate mutase (228 aa).

Residues 8–15 (RHGQSEWN), 21–22 (TG), Arg-60, 87–90 (ERHY), Lys-98, 114–115 (RR), and 183–184 (GN) each bind substrate. His-9 (tele-phosphohistidine intermediate) is an active-site residue. Residue Glu-87 is the Proton donor/acceptor of the active site.

Belongs to the phosphoglycerate mutase family. BPG-dependent PGAM subfamily.

The catalysed reaction is (2R)-2-phosphoglycerate = (2R)-3-phosphoglycerate. It participates in carbohydrate degradation; glycolysis; pyruvate from D-glyceraldehyde 3-phosphate: step 3/5. In terms of biological role, catalyzes the interconversion of 2-phosphoglycerate and 3-phosphoglycerate. This chain is 2,3-bisphosphoglycerate-dependent phosphoglycerate mutase, found in Staphylococcus epidermidis (strain ATCC 35984 / DSM 28319 / BCRC 17069 / CCUG 31568 / BM 3577 / RP62A).